Consider the following 176-residue polypeptide: ATP synthase subunit b (176 aa).

The chain crosses the membrane as a helical span at residues 14-34 (STTLGTMIVVSGAFLILMLLL).

It belongs to the ATPase B chain family. In terms of assembly, F-type ATPases have 2 components, F(1) - the catalytic core - and F(0) - the membrane proton channel. F(1) has five subunits: alpha(3), beta(3), gamma(1), delta(1), epsilon(1). F(0) has three main subunits: a(1), b(2) and c(10-14). The alpha and beta chains form an alternating ring which encloses part of the gamma chain. F(1) is attached to F(0) by a central stalk formed by the gamma and epsilon chains, while a peripheral stalk is formed by the delta and b chains.

The protein resides in the cell membrane. F(1)F(0) ATP synthase produces ATP from ADP in the presence of a proton or sodium gradient. F-type ATPases consist of two structural domains, F(1) containing the extramembraneous catalytic core and F(0) containing the membrane proton channel, linked together by a central stalk and a peripheral stalk. During catalysis, ATP synthesis in the catalytic domain of F(1) is coupled via a rotary mechanism of the central stalk subunits to proton translocation. In terms of biological role, component of the F(0) channel, it forms part of the peripheral stalk, linking F(1) to F(0). This chain is ATP synthase subunit b, found in Enterococcus faecalis (strain ATCC 700802 / V583).